The following is a 197-amino-acid chain: 5'-deoxynucleotidase YpsIP31758_1449 (197 aa).

Residues Arg16–Trp17 and His31 contribute to the substrate site. Residues Val28–Tyr140 enclose the HD domain. Positions 31, 66, and 67 each coordinate a divalent metal cation. Substrate contacts are provided by residues Asp67, Asp75–Thr78, and Asp135. Position 135 (Asp135) interacts with a divalent metal cation.

It belongs to the 5DNU family. Homodimer. A divalent metal cation is required as a cofactor.

The protein resides in the cytoplasm. It catalyses the reaction a 2'-deoxyribonucleoside 5'-phosphate + H2O = a 2'-deoxyribonucleoside + phosphate. Catalyzes the strictly specific dephosphorylation of 2'-deoxyribonucleoside 5'-monophosphates. This Yersinia pseudotuberculosis serotype O:1b (strain IP 31758) protein is 5'-deoxynucleotidase YpsIP31758_1449.